A 507-amino-acid polypeptide reads, in one-letter code: Hippocampus abundant transcript-like protein 1 (507 aa).

Residues 1 to 27 (MSTDGESPEEPRWKAVASPKASTMPEK) form a disordered region. The Extracellular portion of the chain corresponds to 1–51 (MSTDGESPEEPRWKAVASPKASTMPEKRGSAQAASGSWLQGFGHPSVYHAA). The chain crosses the membrane as a helical span at residues 52–72 (FVIFLEFFAWGLLTTPMLTVL). The Cytoplasmic segment spans residues 73–84 (HETFPQHTFLMN). A helical transmembrane segment spans residues 85 to 105 (GLIQGVKGLLSFLSAPLIGAL). Topologically, residues 106–113 (SDVWGRKP) are extracellular. Residues 114–134 (FLLGTVFFTCFPIPLMRINPW) form a helical membrane-spanning segment. At 135–136 (WY) the chain is on the cytoplasmic side. The helical transmembrane segment at 137–157 (FGMISVSGVFSVTFSVIFAYV) threads the bilayer. The Extracellular portion of the chain corresponds to 158-170 (ADFTQEHERSTAY). The chain crosses the membrane as a helical span at residues 171-191 (GWVSATFAASLVSSPAIGTYL). At 192–198 (SANYGDS) the chain is on the cytoplasmic side. The chain crosses the membrane as a helical span at residues 199-219 (LVVLVATLVALLDICFILIAV). The Extracellular portion of the chain corresponds to 220–257 (PESLSEKIRPASWGAQISWKQADPFASLKKVGKDSTVL). The chain crosses the membrane as a helical span at residues 258 to 278 (LICITVFLSYLPEAGQYSSFF). Residues 279 to 283 (LYLRQ) are Cytoplasmic-facing. Residues 284–304 (VIGFGSVKIVAFIAMVGILSI) form a helical membrane-spanning segment. Residues 305–323 (VAQTVFLSKLMRSLGNKNT) are Extracellular-facing. A helical membrane pass occupies residues 324-344 (VLLGLGFQMLQLAWYGFGSQA). Residues 345 to 347 (WMM) are Cytoplasmic-facing. A helical transmembrane segment spans residues 348-368 (WAAGTVAAMSSITFPAVSALI). The Extracellular segment spans residues 369-389 (SRNAESDQQGVAQGIVTGIRG). The helical transmembrane segment at 390 to 410 (LCNGLGPALYGFIFYMFHVEL) threads the bilayer. Residues 411–430 (SELGPKLNSDDDPLQGAFIP) are Cytoplasmic-facing. Residues 431–451 (GPPFLFGACIVLMSFLVALFI) traverse the membrane as a helical segment. Over 452 to 507 (PEYRKTSGVQKHNNSTSGSLSTPPERGSDEDIEPLLQDSSIWELSFEEPGNQCTEL) the chain is Extracellular. The span at 459 to 473 (GVQKHNNSTSGSLST) shows a compositional bias: polar residues. Positions 459–483 (GVQKHNNSTSGSLSTPPERGSDEDI) are disordered. N-linked (GlcNAc...) asparagine glycans are attached at residues Asn-464 and Asn-465.

It belongs to the major facilitator superfamily.

The protein resides in the membrane. This is Hippocampus abundant transcript-like protein 1 from Mus musculus (Mouse).